The primary structure comprises 310 residues: p-hydroxybenzoic acid efflux pump subunit AaeA (310 aa).

The chain crosses the membrane as a helical span at residues Ala12–Tyr32.

This sequence belongs to the membrane fusion protein (MFP) (TC 8.A.1) family.

The protein resides in the cell inner membrane. Functionally, forms an efflux pump with AaeB. The polypeptide is p-hydroxybenzoic acid efflux pump subunit AaeA (Klebsiella pneumoniae (strain 342)).